The following is a 266-amino-acid chain: tRNA (guanine-N(7)-)-methyltransferase (266 aa).

Positions 1–32 are disordered; it reads MSDHGRMHIPESGLATPAAAHSDDPPHPHFNR. 4 residues coordinate S-adenosyl-L-methionine: Glu-96, Glu-121, Asp-148, and Asp-171. Residue Asp-171 is part of the active site. 2 residues coordinate substrate: Lys-175 and Asp-207.

This sequence belongs to the class I-like SAM-binding methyltransferase superfamily. TrmB family.

It catalyses the reaction guanosine(46) in tRNA + S-adenosyl-L-methionine = N(7)-methylguanosine(46) in tRNA + S-adenosyl-L-homocysteine. Its pathway is tRNA modification; N(7)-methylguanine-tRNA biosynthesis. In terms of biological role, catalyzes the formation of N(7)-methylguanine at position 46 (m7G46) in tRNA. This chain is tRNA (guanine-N(7)-)-methyltransferase, found in Mycolicibacterium vanbaalenii (strain DSM 7251 / JCM 13017 / BCRC 16820 / KCTC 9966 / NRRL B-24157 / PYR-1) (Mycobacterium vanbaalenii).